The following is a 764-amino-acid chain: Plasma membrane fusion protein prm-1 (764 aa).

Topologically, residues Met1–Gln61 are extracellular. Residues Leu62 to Thr82 traverse the membrane as a helical segment. Residues Ala83–Ala149 lie on the Cytoplasmic side of the membrane. The chain crosses the membrane as a helical span at residues Ile150–Ile170. Over His171–Lys334 the chain is Extracellular. 2 N-linked (GlcNAc...) asparagine glycosylation sites follow: Asn271 and Asn315. A helical membrane pass occupies residues Ile335–Ile355. Residues Glu356–Ala424 are Cytoplasmic-facing. A helical membrane pass occupies residues Leu425–Leu445. Residues Arg446 to Thr624 are Extracellular-facing. 3 N-linked (GlcNAc...) asparagine glycosylation sites follow: Asn479, Asn508, and Asn527. Residues Leu625 to Gly645 traverse the membrane as a helical segment. The Cytoplasmic portion of the chain corresponds to Trp646–Ile764. Disordered regions lie at residues Arg653–Gly701 and His735–Asp754.

Belongs to the PRM1 family.

It is found in the cell membrane. Functionally, involved in cell fusion during mating by stabilizing the plasma membrane fusion event. This Neurospora crassa (strain ATCC 24698 / 74-OR23-1A / CBS 708.71 / DSM 1257 / FGSC 987) protein is Plasma membrane fusion protein prm-1 (prm-1).